Here is a 347-residue protein sequence, read N- to C-terminus: NADH-quinone oxidoreductase subunit H (347 aa).

A run of 8 helical transmembrane segments spans residues 25–45, 95–115, 128–148, 168–188, 200–220, 251–271, 284–304, and 324–344; these read ILFM…VAAM, FMFT…FAII, IGIL…LFGG, ISYE…TGSF, GWYI…GVAV, FFIG…CLFF, FIPP…MFVL, and VCLP…LIFS.

It belongs to the complex I subunit 1 family. NDH-1 is composed of 14 different subunits. Subunits NuoA, H, J, K, L, M, N constitute the membrane sector of the complex.

The protein resides in the cell inner membrane. The enzyme catalyses a quinone + NADH + 5 H(+)(in) = a quinol + NAD(+) + 4 H(+)(out). In terms of biological role, NDH-1 shuttles electrons from NADH, via FMN and iron-sulfur (Fe-S) centers, to quinones in the respiratory chain. The immediate electron acceptor for the enzyme in this species is believed to be ubiquinone. Couples the redox reaction to proton translocation (for every two electrons transferred, four hydrogen ions are translocated across the cytoplasmic membrane), and thus conserves the redox energy in a proton gradient. This subunit may bind ubiquinone. In Psychrobacter cryohalolentis (strain ATCC BAA-1226 / DSM 17306 / VKM B-2378 / K5), this protein is NADH-quinone oxidoreductase subunit H.